The sequence spans 394 residues: Phosphoglycerate kinase (394 aa).

Residues 21–23, R37, 60–63, R119, and R152 each bind substrate; these read DFN and HLGR. Residues K202, E324, and 350–353 contribute to the ATP site; that span reads GGDS.

It belongs to the phosphoglycerate kinase family. As to quaternary structure, monomer.

It is found in the cytoplasm. The catalysed reaction is (2R)-3-phosphoglycerate + ATP = (2R)-3-phospho-glyceroyl phosphate + ADP. Its pathway is carbohydrate degradation; glycolysis; pyruvate from D-glyceraldehyde 3-phosphate: step 2/5. The chain is Phosphoglycerate kinase from Carboxydothermus hydrogenoformans (strain ATCC BAA-161 / DSM 6008 / Z-2901).